Reading from the N-terminus, the 33-residue chain is Zinc metalloproteinase-disintegrin-like moojenin (33 aa).

In terms of domain architecture, Disintegrin spans 8–33 (PPVCGNELLEVGEECDCGTPENCQNE). Ca(2+)-binding residues include Val10, Asn13, Leu15, Glu17, Glu20, and Asp23. Cystine bridges form between Cys11/Cys30 and Cys24/Cys30.

The protein belongs to the venom metalloproteinase (M12B) family. P-III subfamily. P-IIIb sub-subfamily. In terms of assembly, monomer. Zn(2+) serves as cofactor. Post-translationally, the N-terminus (from the N-terminal region of the metalloproteinase domain) is blocked. As to expression, expressed by the venom gland.

It localises to the secreted. The fibrinogenolytic and coagulant activities of the moojenin were abolished by preincubation with EDTA, 1,10-phenanthroline and beta-mercaptoethanol. In terms of biological role, metalloproteinase moojenin: snake venom metalloproteinase that cleaves both alpha- and beta-chains of fibrinogen, but not the gamma-chain. Shows a coagulant activity on bovine plasma about 3.1 fold lower than crude venom. Renders the blood incoagulable when intraperitoneally administered into mice. Induces necrosis in liver and muscle, but does not cause histological alterations in mouse lungs, kidney or heart. This chain is Zinc metalloproteinase-disintegrin-like moojenin, found in Bothrops moojeni (Lance-headed viper).